Reading from the N-terminus, the 240-residue chain is MKIKIIFSYDGSAFLGSATQPHKKGVQDALSGALSHLGIFSPLLMASRTDKGVHASYAVASVECGDYFTNLEYLQKQLNKFSHPFIHIKKIEKVKDDFEVRFDVKSREYRYIFSHASYSPFMASYVHFYPKFDLGKANELLGFFVGKKDLKFFCKSGGDNKTTLREIFIARAYAYKDFSIFHFKANGFLRGQIRLSVASVLKVLEGKMSEKELKEQIEAKKQYNHFLAPPNGLYLSRICY.

Asp-50 acts as the Nucleophile in catalysis. Residue Tyr-109 participates in substrate binding.

Belongs to the tRNA pseudouridine synthase TruA family. As to quaternary structure, homodimer.

It carries out the reaction uridine(38/39/40) in tRNA = pseudouridine(38/39/40) in tRNA. Formation of pseudouridine at positions 38, 39 and 40 in the anticodon stem and loop of transfer RNAs. This chain is tRNA pseudouridine synthase A, found in Campylobacter jejuni subsp. jejuni serotype O:6 (strain 81116 / NCTC 11828).